We begin with the raw amino-acid sequence, 226 residues long: UPF0111 protein PH0637 (226 aa).

This sequence belongs to the UPF0111 family.

This Pyrococcus horikoshii (strain ATCC 700860 / DSM 12428 / JCM 9974 / NBRC 100139 / OT-3) protein is UPF0111 protein PH0637.